The following is a 66-amino-acid chain: Large ribosomal subunit protein bL31 (66 aa).

Zn(2+)-binding residues include Cys16, Cys18, Cys36, and Cys39.

The protein belongs to the bacterial ribosomal protein bL31 family. Type A subfamily. In terms of assembly, part of the 50S ribosomal subunit. Zn(2+) is required as a cofactor.

Functionally, binds the 23S rRNA. In Pelobacter propionicus (strain DSM 2379 / NBRC 103807 / OttBd1), this protein is Large ribosomal subunit protein bL31.